The sequence spans 591 residues: L-fucose isomerase (591 aa).

Residues E337 and D361 each act as proton acceptor in the active site. Residues E337, D361, and H528 each coordinate Mn(2+).

Belongs to the L-fucose isomerase family. In terms of assembly, homohexamer. It depends on Mn(2+) as a cofactor.

It localises to the cytoplasm. It carries out the reaction L-fucose = L-fuculose. It participates in carbohydrate degradation; L-fucose degradation; L-lactaldehyde and glycerone phosphate from L-fucose: step 1/3. Its function is as follows. Converts the aldose L-fucose into the corresponding ketose L-fuculose. In Escherichia coli O139:H28 (strain E24377A / ETEC), this protein is L-fucose isomerase.